Here is a 197-residue protein sequence, read N- to C-terminus: HTH-type transcriptional repressor BdcR (197 aa).

One can recognise an HTH tetR-type domain in the interval 15-75; sequence RFAPEQAISA…RVLNEYVGTE (61 aa). Residues 38–57 constitute a DNA-binding region (H-T-H motif); it reads SVAEVTDYLGINPPSLYAAF.

In terms of biological role, negatively regulates expression of bdcA. In Escherichia coli (strain K12), this protein is HTH-type transcriptional repressor BdcR (bdcR).